The primary structure comprises 1251 residues: MLGWVQRVLPQPPGTPRKTKMQEEEEVEPEPEMEAEVEPEPNPEEAETESESMPPEESFKEEEVAVADPSPQETKEAALTSTISLRAQGAEISEMNSPSRRVLTWLMKGVEKVIPQPVHSITEDPAQILGHGSTGDTGCTDEPNEALEAQDTRPGLRLLLWLEQNLERVLPQPPKSSEVWRDEPAVATGAASDPAPPGRPQEMGPKLQARETPSLPTPIPLQPKEEPKEAPAPEPQPGSQAQTSSLPPTRDPARLVAWVLHRLEMALPQPVLHGKIGEQEPDSPGICDVQTISILPGGQVEPDLVLEEVEPPWEDAHQDVSTSPQGTEVVPAYEEENKAVEKMPRELSRIEEEKEDEEEEEEEEEEEEEEEVTEVLLDSCVVSQVGVGQSEEDGTRPQSTSDQKLWEEVGEEAKKEAEEKAKEEAEEVAEEEAEKEPQDWAETKEEPEAEAEAASSGVPATKQHPEVQVEDTDADSCPLMAEENPPSTVLPPPSPAKSDTLIVPSSASGTHRKKLPSEDDEAEELKALSPAESPVVAWSDPTTPKDTDGQDRAASTASTNSAIINDRLQELVKLFKERTEKVKEKLIDPDVTSDEESPKPSPAKKAPEPAPDTKPAEAEPVEEEHYCDMLCCKFKHRPWKKYQFPQSIDPLTNLMYVLWLFFVVMAWNWNCWLIPVRWAFPYQTPDNIHHWLLMDYLCDLIYFLDITVFQTRLQFVRGGDIITDKKDMRNNYLKSRRFKMDLLSLLPLDFLYLKVGVNPLLRLPRCLKYMAFFEFNSRLESILSKAYVYRVIRTTAYLLYSLHLNSCLYYWASAYQGLGSTHWVYDGVGNSYIRCYYFAVKTLITIGGLPDPKTLFEIVFQLLNYFTGVFAFSVMIGQMRDVVGAATAGQTYYRSCMDSTVKYMNFYKIPKSVQNRVKTWYEYTWHSQGMLDESELMVQLPDKMRLDLAIDVNYNIVSKVALFQGCDRQMIFDMLKRLRSVVYLPNDYVCKKGEIGREMYIIQAGQVQVLGGPDGKSVLVTLKAGSVFGEISLLAVGGGNRRTANVVAHGFTNLFILDKKDLNEILVHYPESQKLLRKKARRMLRSNNKPKEEKSVLILPPRAGTPKLFNAALAMTGKMGGKGAKGGKLAHLRARLKELAALEAAAKQQELVEQAKSSQDVKGEEGSAAPDQHTHPKEAATDPPAPRTPPEPPGSPPSSPPPASLGRPEGEEEGPAEPEEHSVRICMSPGPEPGEQILSVKMPEEREEKAE.

Disordered stretches follow at residues 1-75 (MLGW…QETK), 121-151 (ITED…EAQD), 172-252 (QPPK…TRDP), and 314-561 (EDAH…STNS). Over 1–656 (MLGWVQRVLP…SIDPLTNLMY (656 aa)) the chain is Cytoplasmic. Over residues 23–50 (EEEEVEPEPEMEAEVEPEPNPEEAETES) the composition is skewed to acidic residues. Residues 238-247 (GSQAQTSSLP) are compositionally biased toward polar residues. A compositionally biased stretch (basic and acidic residues) spans 335 to 352 (EENKAVEKMPRELSRIEE). Residues 353-373 (EKEDEEEEEEEEEEEEEEEVT) show a composition bias toward acidic residues. Residues 404 to 423 (KLWEEVGEEAKKEAEEKAKE) show a composition bias toward basic and acidic residues. The segment covering 424–434 (EAEEVAEEEAE) has biased composition (acidic residues). Residues 435–446 (KEPQDWAETKEE) are compositionally biased toward basic and acidic residues. A calmodulin-binding CaM1 region spans residues 557–567 (ASTNSAIINDR). An IQ-like motif is present at residues 568 to 578 (LQELVKLFKER). A disordered region spans residues 585-619 (KLIDPDVTSDEESPKPSPAKKAPEPAPDTKPAEAE). The helical transmembrane segment at 657 to 678 (VLWLFFVVMAWNWNCWLIPVRW) threads the bilayer. Topologically, residues 679–687 (AFPYQTPDN) are extracellular. The helical transmembrane segment at 688 to 709 (IHHWLLMDYLCDLIYFLDITVF) threads the bilayer. Residues 710–724 (QTRLQFVRGGDIITD) lie on the Cytoplasmic side of the membrane. A helical membrane pass occupies residues 725-744 (KKDMRNNYLKSRRFKMDLLS). Over 745 to 760 (LLPLDFLYLKVGVNPL) the chain is Extracellular. The chain crosses the membrane as a helical span at residues 761–773 (LRLPRCLKYMAFF). Residues 774 to 785 (EFNSRLESILSK) lie on the Cytoplasmic side of the membrane. Residues 786-808 (AYVYRVIRTTAYLLYSLHLNSCL) traverse the membrane as a helical segment. Positions 786–885 (AYVYRVIRTT…IGQMRDVVGA (100 aa)) are ion conduction pathway. At 809–831 (YYWASAYQGLGSTHWVYDGVGNS) the chain is on the extracellular side. Helical transmembrane passes span 832 to 858 (YIRC…LFEI) and 859 to 884 (VFQL…DVVG). The Cytoplasmic segment spans residues 885–1251 (AATAGQTYYR…MPEEREEKAE (367 aa)). Positions 888–964 (AGQTYYRSCM…NIVSKVALFQ (77 aa)) are C-linker. Residues 968-1084 (RQMIFDMLKR…LLRKKARRML (117 aa)) are cyclic nucleotide-binding domain. The 3',5'-cyclic GMP site is built by Gly-1029, Glu-1030, Ser-1032, Arg-1042, and Thr-1043. Arg-1042 is a 3',5'-cyclic AMP binding site. Residues 1148–1154 (QQELVEQ) are calmodulin-binding CaM2. Residues 1151–1251 (LVEQAKSSQD…MPEEREEKAE (101 aa)) are disordered. Residues 1183 to 1203 (PPAPRTPPEPPGSPPSSPPPA) are compositionally biased toward pro residues. Residues 1242–1251 (MPEEREEKAE) show a composition bias toward basic and acidic residues.

Belongs to the cyclic nucleotide-gated cation channel (TC 1.A.1.5) family. CNGB1 subfamily. The rod cyclic nucleotide-gated channel is a heterotetramer composed of CNGA1 and CNGB1 subunits with 3:1 stoichiometry. CNGA1:CNGB1 channel binds Ca(2+)-bound CALM1 via CaM1 and CaM2 regions of the CNGB1 subunit; this interaction modulates the affinity of the channel for cNMPs in response to intracellular Ca(2+) levels. The olfactory cyclic nucleotide-gated channel is a heterotetramer composed of CNGA2, CNGA4 and CNGB1 subunits with 2:1:1 stoichiometry.

The protein localises to the cell membrane. It is found in the cell projection. Its subcellular location is the cilium membrane. It carries out the reaction Ca(2+)(in) = Ca(2+)(out). It catalyses the reaction Na(+)(in) = Na(+)(out). The catalysed reaction is K(+)(in) = K(+)(out). The enzyme catalyses NH4(+)(in) = NH4(+)(out). It carries out the reaction Rb(+)(in) = Rb(+)(out). It catalyses the reaction Li(+)(in) = Li(+)(out). The catalysed reaction is Cs(+)(in) = Cs(+)(out). Its function is as follows. Pore-forming subunit of the rod cyclic nucleotide-gated channel. Mediates rod photoresponses at dim light converting transient changes in intracellular cGMP levels into electrical signals. In the dark, cGMP levels are high and keep the channel open enabling a steady inward current carried by Na(+) and Ca(2+) ions that leads to membrane depolarization and neurotransmitter release from synaptic terminals. Upon photon absorption cGMP levels decline leading to channel closure and membrane hyperpolarization that ultimately slows neurotransmitter release and signals the presence of light, the end point of the phototransduction cascade. Pore-forming subunit of the olfactory cyclic nucleotide-gated channel. Operates in the cilia of olfactory sensory neurons where chemical stimulation of the odorant is converted to an electrical signal. Mediates odorant-induced cAMP-dependent Ca(2+) influx triggering neuron depolarization. The rise of intracellular Ca(2+) levels potentiates the olfactory response by activating Ca(2+)-dependent Cl(-) channels, but it also serves as a negative feedback signal to desensitize the channel for rapid adaptation to odorants. Conducts cGMP- and cAMP-gated ion currents, with permeability for monovalent and divalent cations. The selectivity for Ca(2+) over Na(+) increases with cGMP concentrations, whereas the selectivity among monovalent ions is independent of the cGMP levels. Functionally, high affinity rod photoreceptor phosphodiesterase (PDE6)-binding protein that modulates its catalytic properties: it is a regulator of spontaneous activation of rod PDE6, thereby serving to lower rod photoreceptor 'dark noise' and allowing these sensory cells to operate at the single photon detection limit. The chain is Cyclic nucleotide-gated channel beta-1 from Homo sapiens (Human).